The primary structure comprises 240 residues: Octanoyltransferase (240 aa).

In terms of domain architecture, BPL/LPL catalytic spans 49-233 (HQAEELVWLL…AFESVFGATR (185 aa)). Residues 87-94 (RGGQVTYH), 162-164 (AIG), and 175-177 (GIA) each bind substrate. The active-site Acyl-thioester intermediate is Cys193.

The protein belongs to the LipB family.

It is found in the cytoplasm. It carries out the reaction octanoyl-[ACP] + L-lysyl-[protein] = N(6)-octanoyl-L-lysyl-[protein] + holo-[ACP] + H(+). The protein operates within protein modification; protein lipoylation via endogenous pathway; protein N(6)-(lipoyl)lysine from octanoyl-[acyl-carrier-protein]: step 1/2. Functionally, catalyzes the transfer of endogenously produced octanoic acid from octanoyl-acyl-carrier-protein onto the lipoyl domains of lipoate-dependent enzymes. Lipoyl-ACP can also act as a substrate although octanoyl-ACP is likely to be the physiological substrate. In Bradyrhizobium sp. (strain ORS 278), this protein is Octanoyltransferase.